We begin with the raw amino-acid sequence, 328 residues long: MNMSDQRIPQNTGDNSNNSNSNNNNNNNNNTHTISNLSAGLKSVSLTDQQQNEVNLNLLQQQLHRESSNQQQQSRITQFFQNQPAEGYTLFSHRSAPNGFKVAIILSELNLPFNTIFLDFNNGEQRAPEFVTINPNARVPALIDHFNENTSIWESGAIILYLVSKYLKENGECSLWSDNLIEQSQISSWLFFQTSGHAPMIGQALHFRYFHSCPVPSAVERYTDEVRRVYGVVEMALAERREALIMDLDVENAAAYSAGTTPLSQSRYFDYPVWLVGDRATVADLSFVPWNNVVDRIGINLKVEFPEVYKWTKYMMRRPAVIRALRGD.

Residues 1-14 (MNMSDQRIPQNTGD) show a composition bias toward polar residues. The tract at residues 1–35 (MNMSDQRIPQNTGDNSNNSNSNNNNNNNNNTHTIS) is disordered. A compositionally biased stretch (low complexity) spans 15–30 (NSNNSNSNNNNNNNNN). Residues 86–170 (EGYTLFSHRS…YLVSKYLKEN (85 aa)) form the GST N-terminal domain. Positions 179–328 (NLIEQSQISS…PAVIRALRGD (150 aa)) constitute a GST C-terminal domain.

The protein belongs to the GST superfamily. As to quaternary structure, homodimer.

Plays an important role in the cellular response to the nitrogen source. URE2 gene plays a major part in the repression of GLN1 and GDH2 genes by glutamine, and is required for the inactivation of glutamine synthetase. URE2 gene product may catalytically inactivate GLN3 in response to an increase in the intracellular concentration of glutamine. The chain is Protein URE2 (URE2) from Candida maltosa (Yeast).